We begin with the raw amino-acid sequence, 314 residues long: Short-chain dehydrogenase/reductase sthC (314 aa).

Positions 1–10 (MAPAETTGNV) are enriched in polar residues. Positions 1–27 (MAPAETTGNVQRPEAGKQSMGSFWTQM) are disordered. The NADP(+) site is built by Val-56, Lys-80, Asp-105, Asn-132, and Arg-167. The Proton donor role is filled by Ser-191. Tyr-222 and Lys-226 together coordinate NADP(+). Catalysis depends on Tyr-222, which acts as the Proton acceptor. Lys-226 (lowers pKa of active site Tyr) is an active-site residue.

Belongs to the short-chain dehydrogenases/reductases (SDR) family.

It carries out the reaction dehydroprobetaenone I + AH2 = probetaenone I + A. It catalyses the reaction betaenone C + AH2 = betaenone B + A. It participates in mycotoxin biosynthesis. Its function is as follows. Short-chain dehydrogenase/reductase; part of the gene cluster that mediates the biosynthesis of the phytotoxin stemphyloxin II. The first step of the pathway is the synthesis of dehydroprobetaenone I by the polyketide synthase sthA and the enoyl reductase sthE via condensation of one acetyl-CoA starter unit with 7 malonyl-CoA units and 5 methylations. The C-terminal reductase (R) domain of sthA catalyzes the reductive release of the polyketide chain. Because sthA lacks a designated enoylreductase (ER) domain, the required activity is provided the enoyl reductase sthE. The short-chain dehydrogenase/reductase sthC then catalyzes reduction of dehydroprobetaenone I to probetaenone I. The cytochrome P450 monooxygenase sthF catalyzes successive epoxidation, oxidation (resulting from epoxide opening) and hydroxylation to install a tertiary alcohol in the decaline ring to yield betaenone C from dehydroprobetaenone I and betaenone B from probetaenone I. The FAD-linked oxidoreductase sthB is responsible for the conversion of betaenone C to betaenone A via an intramolecular aldol reaction between C-1 and C-17 to form the bridged tricyclic system in betaenone A. Finally, the cytochrome P450 monooxygenase sthD catalyzes the hydroxylation of C-15 to afford the final metabolite stemphyloxin II. This chain is Short-chain dehydrogenase/reductase sthC, found in Phaeosphaeria nodorum (strain SN15 / ATCC MYA-4574 / FGSC 10173) (Glume blotch fungus).